The following is a 405-amino-acid chain: Imidazolonepropionase (405 aa).

H73 and H75 together coordinate Fe(3+). Residues H73 and H75 each coordinate Zn(2+). 4-imidazolone-5-propanoate contacts are provided by R82, Y145, and H178. Y145 serves as a coordination point for N-formimidoyl-L-glutamate. H243 is a binding site for Fe(3+). H243 is a binding site for Zn(2+). A 4-imidazolone-5-propanoate-binding site is contributed by Q246. D318 provides a ligand contact to Fe(3+). Position 318 (D318) interacts with Zn(2+). Residues N320 and G322 each coordinate N-formimidoyl-L-glutamate. A 4-imidazolone-5-propanoate-binding site is contributed by T323.

Belongs to the metallo-dependent hydrolases superfamily. HutI family. Requires Zn(2+) as cofactor. Fe(3+) serves as cofactor.

The protein resides in the cytoplasm. It carries out the reaction 4-imidazolone-5-propanoate + H2O = N-formimidoyl-L-glutamate. The protein operates within amino-acid degradation; L-histidine degradation into L-glutamate; N-formimidoyl-L-glutamate from L-histidine: step 3/3. In terms of biological role, catalyzes the hydrolytic cleavage of the carbon-nitrogen bond in imidazolone-5-propanoate to yield N-formimidoyl-L-glutamate. It is the third step in the universal histidine degradation pathway. This chain is Imidazolonepropionase, found in Brucella suis biovar 1 (strain 1330).